The following is a 542-amino-acid chain: Aminotriazole resistance protein (542 aa).

Residues 1–108 (MGNQSLVVLT…SFGSEGNSKS (108 aa)) are Cytoplasmic-facing. The chain crosses the membrane as a helical span at residues 109 to 129 (WLMASFPLVSGSFILISGRLG). Residues 130–136 (DIYGLKK) lie on the Extracellular side of the membrane. A helical membrane pass occupies residues 137 to 157 (MLLVGYVLVIIWSLICGITKY). The Cytoplasmic segment spans residues 158-172 (SGSDTFFIISRAFQG). A helical membrane pass occupies residues 173 to 193 (LGIAFVLPNVLGIIGNIYVGG). Topologically, residues 194-198 (TFRKN) are extracellular. A helical membrane pass occupies residues 199 to 219 (IVISFVGAMAPIGATLGCLFA). The Cytoplasmic portion of the chain corresponds to 220–231 (GLIGTEDPKQWP). Residues 232-252 (WAFYAYSIAAFINFVLSIYAI) traverse the membrane as a helical segment. The Extracellular portion of the chain corresponds to 253-262 (PSTIPTNIHH). The chain crosses the membrane as a helical span at residues 263 to 283 (FSMDWIGSVLGVIGLILLNFV). Over 284-295 (WNQAPISGWNQA) the chain is Cytoplasmic. Residues 296–316 (YIIVILIISVIFLVVFIIYEI) form a helical membrane-spanning segment. Residues 317-333 (RFAKTPLLPRAVIKDRH) are Extracellular-facing. A helical membrane pass occupies residues 334–354 (MIQIMLALFFGWGSFGIFTFY). Over 355-371 (YFQFQLNIRQYTALWAG) the chain is Cytoplasmic. The helical transmembrane segment at 372–392 (GTYFMFLIWGIIAALLVGFTI) threads the bilayer. The Extracellular portion of the chain corresponds to 393-399 (KNVSPSV). The chain crosses the membrane as a helical span at residues 400–420 (FLFFSMVAFNVGSIMASVTPV). The Cytoplasmic portion of the chain corresponds to 421–429 (HETYFRTQL). A helical transmembrane segment spans residues 430-450 (GTMIILSFGMDLSFPASSIIF). Topologically, residues 451-505 (SDNLPMEYQGMAGSLVNTVVNYSMSLCLGMGATVETQVNSDGKHLLKGYRGAQYL) are extracellular. An N-linked (GlcNAc...) asparagine glycan is attached at Asn471. The chain crosses the membrane as a helical span at residues 506–526 (GIGLASLACMISGLYMVESFI). Residues 527-542 (KGRRARAAAEYDCTVA) lie on the Cytoplasmic side of the membrane.

It belongs to the major facilitator superfamily.

It is found in the membrane. Functionally, putative component of the machinery responsible for pumping aminotriazole (and possibly other toxic compounds) out of the cell. Probable ATP-dependent export permease. Appears to confer resistance only to aminotriazole. This is Aminotriazole resistance protein (ATR1) from Saccharomyces cerevisiae (strain ATCC 204508 / S288c) (Baker's yeast).